The following is a 310-amino-acid chain: MLVMNIENFPPEILANISGFLTDKEFILLTTIDRFFYGLKKINKLKNPYDFKTIRTIIDEYLFSHLIIDSTDLFDILSKYNINTITLSDNFNGDIKMFYSLPNLNKIHVGLNYTDVDSITGIPDKIINKKEIILTLVSNKIAFDTYSKSLKRLEKKNFLKHTYPQIYNWESIYKIINKHFRIVFNALGKNFDSFTYKESYNLVKLILLFTDPKYKNVLTEYFSKFEILHKYQVLKFHPELRQCITKKNYHLPNFIKENSVIVKEFIYDIKFIHNHKFLYLKNTYEKIIKQHGFNNVNEYRDFLVKLNTHK.

This is an uncharacterized protein from Acanthamoeba polyphaga (Amoeba).